Here is a 366-residue protein sequence, read N- to C-terminus: Ribosomal RNA large subunit methyltransferase M (366 aa).

S-adenosyl-L-methionine-binding positions include Ser188, 221–224 (CPGG), Asp240, Asp260, and Asp277. Lys306 (proton acceptor) is an active-site residue.

This sequence belongs to the class I-like SAM-binding methyltransferase superfamily. RNA methyltransferase RlmE family. RlmM subfamily. As to quaternary structure, monomer.

Its subcellular location is the cytoplasm. The catalysed reaction is cytidine(2498) in 23S rRNA + S-adenosyl-L-methionine = 2'-O-methylcytidine(2498) in 23S rRNA + S-adenosyl-L-homocysteine + H(+). Catalyzes the 2'-O-methylation at nucleotide C2498 in 23S rRNA. The sequence is that of Ribosomal RNA large subunit methyltransferase M from Escherichia coli O139:H28 (strain E24377A / ETEC).